Reading from the N-terminus, the 158-residue chain is Large ribosomal subunit protein uL16 (158 aa).

This sequence belongs to the universal ribosomal protein uL16 family. As to quaternary structure, part of the 50S ribosomal subunit.

Binds 23S rRNA and is also seen to make contacts with the A and possibly P site tRNAs. The sequence is that of Large ribosomal subunit protein uL16 from Synechococcus sp. (strain CC9605).